The primary structure comprises 122 residues: Large ribosomal subunit protein uL14 (122 aa).

This sequence belongs to the universal ribosomal protein uL14 family. In terms of assembly, part of the 50S ribosomal subunit. Forms a cluster with proteins L3 and L19. In the 70S ribosome, L14 and L19 interact and together make contacts with the 16S rRNA in bridges B5 and B8.

In terms of biological role, binds to 23S rRNA. Forms part of two intersubunit bridges in the 70S ribosome. In Novosphingobium aromaticivorans (strain ATCC 700278 / DSM 12444 / CCUG 56034 / CIP 105152 / NBRC 16084 / F199), this protein is Large ribosomal subunit protein uL14.